The primary structure comprises 227 residues: dTTP/UTP pyrophosphatase (227 aa).

Positions 1–21 (MNDLPRAELPGSGSPNPESLI) are disordered. The active-site Proton acceptor is Asp87.

Belongs to the Maf family. YhdE subfamily. A divalent metal cation serves as cofactor.

The protein localises to the cytoplasm. The enzyme catalyses dTTP + H2O = dTMP + diphosphate + H(+). The catalysed reaction is UTP + H2O = UMP + diphosphate + H(+). Its function is as follows. Nucleoside triphosphate pyrophosphatase that hydrolyzes dTTP and UTP. May have a dual role in cell division arrest and in preventing the incorporation of modified nucleotides into cellular nucleic acids. This chain is dTTP/UTP pyrophosphatase, found in Rhodopirellula baltica (strain DSM 10527 / NCIMB 13988 / SH1).